Here is a 426-residue protein sequence, read N- to C-terminus: MAKLLQPSPKFLPEEWHIANKNQYHRAEAQRSRSERLVAESQRLVDEIEKTTRKSQSDVNKKLEQRLEEVRFWKKELDDKLEQLVCTTEDLLTYQTRLQNALESLKEPLHITQMCLEYRDKRIGIDLVHDEVEQELLKEAEVIHGVMALLTRTMDEVTEQIRLNRSAKYNLEKDLKDKFVALTIDDVCFSLNNNSPGIYYSDSVVRVEPHSVSLEDWLDFSNTNVEKANRQRNNSLALKALVDRILSQTADDLRRQCDMVDTAFQMGLKETKAARDQLAAHLAKVMEEIACQEKNMTVLEKAILDQEGPAKVAHTRLETRTRRPNVELCRDVAQYRLVKEVGEIAQNVGRLKEALAQAQVELKGLNRRQLALQEEVQVKENTIYIDRVLCTHMRKSNPLRDGGDQGQWARACAPTPSAEDGTSHTD.

Coiled-coil stretches lie at residues 21 to 84 (KNQY…LEQL), 268 to 307 (LKET…LDQE), and 339 to 383 (KEVG…ENTI). Residues 396–426 (SNPLRDGGDQGQWARACAPTPSAEDGTSHTD) are disordered.

The protein belongs to the tektin family. In terms of assembly, microtubule inner protein component of sperm flagellar doublet microtubules. Ubiquitinated, leading to its degradation. Deubiquitinated by USP16, promoting its stability.

The protein localises to the cytoplasm. It localises to the cytoskeleton. It is found in the cilium axoneme. The protein resides in the flagellum axoneme. Microtubule inner protein (MIP) part of the dynein-decorated doublet microtubules (DMTs) in cilia and flagellar axoneme. Forms filamentous polymers in the walls of ciliary and flagellar microtubules. This is Tektin-1 (TEKT1) from Canis lupus familiaris (Dog).